Reading from the N-terminus, the 167-residue chain is Translationally-controlled tumor protein homolog (167 aa).

The 167-residue stretch at 1-167 folds into the TCTP domain; sequence MIIYKDIFSG…WKHGIDEEKI (167 aa).

This sequence belongs to the TCTP family.

The protein resides in the cytoplasm. It localises to the cytoskeleton. Its function is as follows. Involved in protein synthesis. Involved in microtubule stabilization. The sequence is that of Translationally-controlled tumor protein homolog from Candida glabrata (strain ATCC 2001 / BCRC 20586 / JCM 3761 / NBRC 0622 / NRRL Y-65 / CBS 138) (Yeast).